A 116-amino-acid chain; its full sequence is Large ribosomal subunit protein bL17 (116 aa).

This sequence belongs to the bacterial ribosomal protein bL17 family. In terms of assembly, part of the 50S ribosomal subunit. Contacts protein L32.

This Synechococcus sp. (strain CC9902) protein is Large ribosomal subunit protein bL17.